The sequence spans 604 residues: Inositol-3-phosphate synthase 1 (604 aa).

NAD(+) contacts are provided by Gly-88, Gly-89, Asn-90, Asn-91, Asp-163, Ser-198, Val-199, Gln-210, Arg-213, Ser-251, Gly-252, Asn-253, Thr-254, Ser-303, Asp-327, Leu-328, Thr-330, Asn-361, Asn-362, Asp-363, Lys-376, Gly-456, Asp-457, Asp-485, and Ser-486.

It belongs to the myo-inositol 1-phosphate synthase family. Requires NAD(+) as cofactor.

It carries out the reaction D-glucose 6-phosphate = 1D-myo-inositol 3-phosphate. It participates in polyol metabolism; myo-inositol biosynthesis; myo-inositol from D-glucose 6-phosphate: step 1/2. Its function is as follows. Key enzyme in myo-inositol biosynthesis pathway that catalyzes the conversion of glucose 6-phosphate to 1-myo-inositol 1-phosphate in a NAD-dependent manner. Rate-limiting enzyme in the synthesis of all inositol-containing compounds. De novo-synthesized myo-inositol is essential for incorporation into GPI (glycosylphosphatidylinositol) glycolipids during intra-erythrocytic development. This chain is Inositol-3-phosphate synthase 1, found in Plasmodium falciparum (isolate 3D7).